The chain runs to 243 residues: tRNA (guanine-N(1)-)-methyltransferase (243 aa).

S-adenosyl-L-methionine is bound by residues G113 and 133–138 (IGDFVL).

It belongs to the RNA methyltransferase TrmD family. Homodimer.

Its subcellular location is the cytoplasm. It catalyses the reaction guanosine(37) in tRNA + S-adenosyl-L-methionine = N(1)-methylguanosine(37) in tRNA + S-adenosyl-L-homocysteine + H(+). Specifically methylates guanosine-37 in various tRNAs. This chain is tRNA (guanine-N(1)-)-methyltransferase, found in Bacillus velezensis (strain DSM 23117 / BGSC 10A6 / LMG 26770 / FZB42) (Bacillus amyloliquefaciens subsp. plantarum).